The sequence spans 120 residues: Prefoldin subunit beta (120 aa).

The protein belongs to the prefoldin subunit beta family. As to quaternary structure, heterohexamer of two alpha and four beta subunits.

The protein resides in the cytoplasm. Functionally, molecular chaperone capable of stabilizing a range of proteins. Seems to fulfill an ATP-independent, HSP70-like function in archaeal de novo protein folding. This Methanopyrus kandleri (strain AV19 / DSM 6324 / JCM 9639 / NBRC 100938) protein is Prefoldin subunit beta (pfdB).